A 321-amino-acid chain; its full sequence is MSKPIQIERGVKYRDADKMALIPVRTVVTERQELLRKPEWMKIKLPADSSRIQGIKAAMRKNGLHSVCEEASCPNLAECFNHGTATFMILGAICTRRCPFCDVAHGRPLTPDANEPEKLAQTIHDMGLRYVVITSVDRDDLRDGGAQHFADCISAIRRKNPHIRIETLVPDFRGRMDRALEILTATPPDVFNHNLENVPRVYRQVRPGANYEWSLKLLENFKNAHPDITTKSGLMVGLGETNAEIVEVMRDLRRHGVTMLTLGQYLQPSRHHLPVQRYVSPDEFDEMKAEAMAMGFTHAACGPFVRSSYHADLQAKGIEVK.

Residues Cys-68, Cys-73, Cys-79, Cys-94, Cys-98, Cys-101, and Ser-308 each contribute to the [4Fe-4S] cluster site. The Radical SAM core domain maps to 80–297 (FNHGTATFMI…KAEAMAMGFT (218 aa)).

This sequence belongs to the radical SAM superfamily. Lipoyl synthase family. It depends on [4Fe-4S] cluster as a cofactor.

Its subcellular location is the cytoplasm. The enzyme catalyses [[Fe-S] cluster scaffold protein carrying a second [4Fe-4S](2+) cluster] + N(6)-octanoyl-L-lysyl-[protein] + 2 oxidized [2Fe-2S]-[ferredoxin] + 2 S-adenosyl-L-methionine + 4 H(+) = [[Fe-S] cluster scaffold protein] + N(6)-[(R)-dihydrolipoyl]-L-lysyl-[protein] + 4 Fe(3+) + 2 hydrogen sulfide + 2 5'-deoxyadenosine + 2 L-methionine + 2 reduced [2Fe-2S]-[ferredoxin]. It participates in protein modification; protein lipoylation via endogenous pathway; protein N(6)-(lipoyl)lysine from octanoyl-[acyl-carrier-protein]: step 2/2. Catalyzes the radical-mediated insertion of two sulfur atoms into the C-6 and C-8 positions of the octanoyl moiety bound to the lipoyl domains of lipoate-dependent enzymes, thereby converting the octanoylated domains into lipoylated derivatives. The polypeptide is Lipoyl synthase (Pectobacterium atrosepticum (strain SCRI 1043 / ATCC BAA-672) (Erwinia carotovora subsp. atroseptica)).